An 833-amino-acid chain; its full sequence is Kinesin-like protein KIFC3 (833 aa).

The segment at 19-74 (LWRVGRAPEPEPGMARPAPAPASPAARPFPHTGPGRLRTGRGKDTPVCGDEDSSAR) is disordered. Residues 30 to 48 (PGMARPAPAPASPAARPFP) are compositionally biased toward low complexity. 2 coiled-coil regions span residues 102 to 362 (LTLQ…ENLA) and 395 to 432 (LLQEALRSVKAEIGQAIEEVNSNNQELLRKYRRELQLR). One can recognise a Kinesin motor domain in the interval 445–768 (NIRVIARVRP…LKFAERVRSV (324 aa)). 528-535 (GQTGAGKT) contacts ATP. The interval 786-833 (EHLEWEPACQTPQPSARAHSAPSSGTSSRPGSIRRKLQPSGKSRPLPV) is disordered. The segment covering 806 to 815 (APSSGTSSRP) has biased composition (polar residues). Ser813 and Ser817 each carry phosphoserine.

Belongs to the TRAFAC class myosin-kinesin ATPase superfamily. Kinesin family.

The protein resides in the cell junction. It localises to the adherens junction. The protein localises to the cytoplasm. Its subcellular location is the cytoskeleton. It is found in the microtubule organizing center. The protein resides in the centrosome. It localises to the cytoplasmic vesicle membrane. Its function is as follows. Minus-end microtubule-dependent motor protein. Involved in apically targeted transport. Required for zonula adherens maintenance. The sequence is that of Kinesin-like protein KIFC3 (KIFC3) from Homo sapiens (Human).